A 309-amino-acid polypeptide reads, in one-letter code: Homoserine kinase (309 aa).

91–101 (PIGSGLGSSAC) contributes to the ATP binding site.

This sequence belongs to the GHMP kinase family. Homoserine kinase subfamily.

It is found in the cytoplasm. The enzyme catalyses L-homoserine + ATP = O-phospho-L-homoserine + ADP + H(+). Its pathway is amino-acid biosynthesis; L-threonine biosynthesis; L-threonine from L-aspartate: step 4/5. Catalyzes the ATP-dependent phosphorylation of L-homoserine to L-homoserine phosphate. The chain is Homoserine kinase from Buchnera aphidicola subsp. Schizaphis graminum (strain Sg).